A 426-amino-acid chain; its full sequence is Potassium channel subfamily K member 2 (426 aa).

Topologically, residues 1 to 61 are cytoplasmic; sequence MLPSASRERP…TTINVMKWKT (61 aa). Important for GNG4 binding and L-glutamate release in astrocytes regions lie at residues 17 to 38 and 51 to 61; these read AAPD…LSFS and DTTINVMKWKT. The helical transmembrane segment at 62-82 threads the bilayer; it reads VSTIFLVVVLYLIIGATVFKA. N-linked (GlcNAc...) asparagine glycosylation is found at asparagine 110 and asparagine 134. An intramembrane region (pore-forming) is located at residues 144–170; sequence LGSSFFFAGTVITTIGFGNISPRTEGG. The K(+) site is built by threonine 157, isoleucine 158, glycine 159, and phenylalanine 160. The segment at 157-162 is selectivity filter 1; it reads TIGFGN. A helical transmembrane segment spans residues 172 to 192; it reads IFCIIYALLGIPLFGFLLAGV. Topologically, residues 193–223 are cytoplasmic; the sequence is GDQLGTIFGKGIAKVEDTFIKWNVSQTKIRI. A helical membrane pass occupies residues 224 to 244; that stretch reads ISTIIFILFGCVLFVALPAII. The pore-forming intramembrane region spans 253-283; that stretch reads ALDAIYFVVITLTTIGFGDYVAGGSDIEYLD. The K(+) site is built by threonine 266, isoleucine 267, glycine 268, and phenylalanine 269. The segment at 266 to 271 is selectivity filter 2; that stretch reads TIGFGD. The chain crosses the membrane as a helical span at residues 288-308; it reads VVWFWILVGLAYFAAVLSMIG. The Cytoplasmic segment spans residues 309–426; that stretch reads DWLRVISKKT…EEIAVIENIK (118 aa). Residues 313 to 326 are interaction with AKAP5; that stretch reads VISKKTKEEVGEFR. Positions 337-385 are essential for chloroform and halothane sensitivity; that stretch reads TAEFKETRRRLSVEIYDKFQRATSIKRKLSAELAGNHNQELTPCRRTLS. Serine 348 is modified (phosphoserine; by PKA).

This sequence belongs to the two pore domain potassium channel (TC 1.A.1.8) family. As to quaternary structure, homodimer; disulfide-linked. Forms heterodimers with other 2-pore domain K(+) channel subunits, such as KCNK1, KCNK4, KCNK10 and KCNK18. Interacts with AKAP5; the channel is recruited to postsynaptic microdomains by AKAP5 where it can integrate neurotransmitter receptor signals. Part of a complex composed of AKAP5 and ADRB2. Upon AKAP5 binding, the channel is no longer sensitive to intracellular acidification, membrane stretch or arachidonic acid stimuli. Interacts with POPDC1; the interaction enhances KCNK2 surface expression and is inhibited by cAMP. Interacts (via N-terminus) with G-protein subunit GNG4 (via C-terminus); this interaction confers ion selectivity to L-glutamate and Cl(-) anions. Post-translationally, phosphorylation at Ser-348 controls the reversible conversion from a leak channel to a voltage-dependent channel. In terms of tissue distribution, detected in kidney, adrenal gland and brain where it is preferentially expressed in the amygdala but not found in thalamus, hypothalamus, hippocampus or substantia nigra.

It localises to the cell membrane. The protein localises to the endoplasmic reticulum membrane. It is found in the cell projection. The protein resides in the axon. Its subcellular location is the dendrite. It localises to the postsynaptic density membrane. The protein localises to the sarcolemma. The enzyme catalyses K(+)(in) = K(+)(out). It catalyses the reaction L-glutamate(out) = L-glutamate(in). It carries out the reaction chloride(in) = chloride(out). The catalysed reaction is Rb(+)(in) = Rb(+)(out). The enzyme catalyses Cs(+)(in) = Cs(+)(out). With respect to regulation, activated by various stimuli including intracellular acidic pH, mechanical stretch and polyunsaturated fatty acids such as arachidonic acid. Activated by volatile anesthetics such as chloroform, halothane, and isoflurane. In terms of biological role, k(+) channel that conducts voltage-dependent outward rectifying currents upon membrane depolarization. Voltage sensing is coupled to K(+) electrochemical gradient in an 'ion flux gating' mode where outward but not inward ion flow opens the gate. Converts to voltage-independent 'leak' conductance mode upon stimulation by various stimuli including mechanical membrane stretch, acidic pH, heat and lipids. Reversibly converts between a voltage-insensitive K(+) 'leak' channel and a voltage-dependent outward rectifying K(+) channel in a phosphorylation-dependent manner. Homo- and heterodimerizes to form functional channels with distinct regulatory and gating properties. In trigeminal ganglia sensory neurons, the heterodimer of KCNK2/TREK-1 and KCNK18/TRESK inhibits neuronal firing and neurogenic inflammation by stabilizing the resting membrane potential at K(+) equilibrium potential as well as by regulating the threshold of action potentials and the spike frequency. At trigeminal A-beta afferent nerves, the heterodimer of KCNK2/TREK-1 and KCNK4/TRAAK is mostly coexpressed at nodes of Ranvier where it conducts voltage-independent mechanosensitive and thermosensitive currents, allowing rapid action potential repolarization, high speed and high frequence saltatory conduction on myelinated nerves to ensure prompt sensory responses. In hippocampal astrocytes, the heterodimer of KCNK2/TREK-1 and KCNK1/TWIK-1 allows passive K(+) conductance under basal conditions, but changes ion selectivity and becomes permeable to L-glutamate and Cl(-) ions upon binding to G-protein subunit GNG4 in stimulated astrocytes. Mediates rapid L-glutamate release in response to activation of G-protein-coupled receptors, such as F2R and CNR1. In hippocampal pyramidal neurons, the homodimer of KCNK2/TREK-1 contributes to gamma-aminobutyric acid (GABA) B-induced slow inhibitory postsynaptic potential. Associates with AKAP5 and Gs-protein-coupled receptor B2AR at postsynaptic dense bodies and converts to a leak channel no longer sensitive to stimulation by arachidonic acid, acidic pH or mechanical stress, nor inhibited by Gq-coupled receptors but still under the negative control of Gs-coupled receptors. Permeable to other monovalent cations such as Rb(+) and Cs(+). Its function is as follows. Does not display channel activity but reduces the channel activity of isoform 1 and isoform 2 and reduces cell surface expression of isoform 2. This is Potassium channel subfamily K member 2 from Homo sapiens (Human).